Here is a 292-residue protein sequence, read N- to C-terminus: Protein SETSIP (292 aa).

The segment covering 1 to 11 has biased composition (low complexity); the sequence is MAPKRQSPLPL. 2 disordered regions span residues 1–43 and 158–292; these read MAPK…EQQE and LNES…GEDD. Residues 35 to 78 are a coiled coil; it reads KKGEKEQQEAIEHIDEVQNEIDRLNEQDSEEILKVEQKYNKLRQ. Residues 237–292 are compositionally biased toward acidic residues; the sequence is DMDDEEGGEDDDDDDDDGDEGEEELEDIDEGDEDEGEEDEDDDEGEEGEEDEGEDD.

This sequence belongs to the nucleosome assembly protein (NAP) family. In terms of tissue distribution, expressed in endothelial cell (EC) and protein-induced pluripotent stem (PiPS) endothelial cell (EC) (at protein level).

The protein localises to the cytoplasm. It localises to the nucleus. Plays a role as a transcriptional activator involved in the early stage of somatic cell reprogramming. Promotes the differentiation of protein-induced pluripotent stem (PiPS) cells into endothelial cells and the formation of vascular-like tubes (in vitro). Involved in the transcription induction of vascular endothelial-cadherin (VE-cadherin) expression. Associates to the VE-cadherin gene promoter. The polypeptide is Protein SETSIP (SETSIP) (Homo sapiens (Human)).